Consider the following 311-residue polypeptide: Probable manganese-dependent inorganic pyrophosphatase (311 aa).

6 residues coordinate Mn(2+): H9, D13, D15, D77, H99, and D151.

This sequence belongs to the PPase class C family. Mn(2+) is required as a cofactor.

The protein resides in the cytoplasm. It catalyses the reaction diphosphate + H2O = 2 phosphate + H(+). In Streptococcus sanguinis (strain SK36), this protein is Probable manganese-dependent inorganic pyrophosphatase.